The chain runs to 132 residues: Small ribosomal subunit protein uS12 (132 aa).

A 3-methylthioaspartic acid modification is found at aspartate 89. A disordered region spans residues 102–132 (LDTSGVADRKQSRSKYGAKVPKAGAAPAKKK). Residues 118-132 (GAKVPKAGAAPAKKK) are compositionally biased toward low complexity.

The protein belongs to the universal ribosomal protein uS12 family. Part of the 30S ribosomal subunit. Contacts proteins S8 and S17. May interact with IF1 in the 30S initiation complex.

In terms of biological role, with S4 and S5 plays an important role in translational accuracy. Functionally, interacts with and stabilizes bases of the 16S rRNA that are involved in tRNA selection in the A site and with the mRNA backbone. Located at the interface of the 30S and 50S subunits, it traverses the body of the 30S subunit contacting proteins on the other side and probably holding the rRNA structure together. The combined cluster of proteins S8, S12 and S17 appears to hold together the shoulder and platform of the 30S subunit. This chain is Small ribosomal subunit protein uS12, found in Chlorobaculum tepidum (strain ATCC 49652 / DSM 12025 / NBRC 103806 / TLS) (Chlorobium tepidum).